The chain runs to 56 residues: MSKGTASMGKRQKRTHAKCRRCGSVSLNVHTKQCTSCGFGKTSRMRTYKWQAKCKY.

Cysteine 19, cysteine 22, cysteine 34, and cysteine 37 together coordinate Zn(2+). The C4-type zinc finger occupies 19-37 (CRRCGSVSLNVHTKQCTSC).

The protein belongs to the eukaryotic ribosomal protein eL37 family. It depends on Zn(2+) as a cofactor.

Binds to the 23S rRNA. The sequence is that of Large ribosomal subunit protein eL37 from Methanosarcina mazei (strain ATCC BAA-159 / DSM 3647 / Goe1 / Go1 / JCM 11833 / OCM 88) (Methanosarcina frisia).